The chain runs to 184 residues: Protein Syd (184 aa).

Belongs to the Syd family.

It localises to the cell inner membrane. Its function is as follows. Interacts with the SecY protein in vivo. May bind preferentially to an uncomplexed state of SecY, thus functioning either as a chelating agent for excess SecY in the cell or as a regulatory factor that negatively controls the translocase function. The chain is Protein Syd from Photobacterium profundum (strain SS9).